Here is a 466-residue protein sequence, read N- to C-terminus: Adenosylhomocysteinase (466 aa).

Positions 57, 132, and 192 each coordinate substrate. 193 to 195 (TTT) contacts NAD(+). Residues Lys222 and Asp226 each coordinate substrate. NAD(+) contacts are provided by residues Asn227, 256–261 (GYGDVG), Glu279, Asn314, 335–337 (IGH), and Asn380.

The protein belongs to the adenosylhomocysteinase family. Requires NAD(+) as cofactor.

Its subcellular location is the cytoplasm. It catalyses the reaction S-adenosyl-L-homocysteine + H2O = L-homocysteine + adenosine. The protein operates within amino-acid biosynthesis; L-homocysteine biosynthesis; L-homocysteine from S-adenosyl-L-homocysteine: step 1/1. May play a key role in the regulation of the intracellular concentration of adenosylhomocysteine. This is Adenosylhomocysteinase from Chromobacterium violaceum (strain ATCC 12472 / DSM 30191 / JCM 1249 / CCUG 213 / NBRC 12614 / NCIMB 9131 / NCTC 9757 / MK).